Consider the following 550-residue polypeptide: MLKNINPTQTQAWKALTAHFESAQDMDLKELFAQDAARFDKYSARFGSDILVDYSKNLINEETLKHLFALANETELKSAIEAMFSGEAINKTEDRAVLHTALRNRSNTPVMVGGEDVMPAVNAVLEKIKSFTERVIGGEWKGYTGKAITDIVNIGIGGSDLGPYMVTEALAPYKNHLNLHFVSNVDGTHIVETLKKVDPETTLFLIASKTFTTQETMTNAHSARDWFLATAGDQAHVAKHFAALSTNAPAVSEFGIDTDNMFEFWDWVGGRYSLWSAIGLSIALAVGYDNFIELLDGAHEMDNHFVSTDLESNIPVILALIGIWYNNFHGAESEAILPYDQYMHRFAAYFQQGNMESNGKYVDREGNAVTYQTGPIIWGEPGTNGQHAFYQLIHQGTKLIPCDFIAPAISHNPASDHHQKLMSNFFAQTEALAFGKSAETVKAEFAKAGKSEEEMASLVPFKVFEGNRPTNSILVKQITPRTLGNLIAMYEHKIFVQGVIWNIFSFDQWGVELGKQLANQILPELADESEINSHDSSTNGLINAFKAFKA.

Catalysis depends on Glu-356, which acts as the Proton donor. Residues His-387 and Lys-515 contribute to the active site.

Belongs to the GPI family.

It localises to the cytoplasm. The catalysed reaction is alpha-D-glucose 6-phosphate = beta-D-fructose 6-phosphate. It participates in carbohydrate biosynthesis; gluconeogenesis. It functions in the pathway carbohydrate degradation; glycolysis; D-glyceraldehyde 3-phosphate and glycerone phosphate from D-glucose: step 2/4. Functionally, catalyzes the reversible isomerization of glucose-6-phosphate to fructose-6-phosphate. This Vibrio campbellii (strain ATCC BAA-1116) protein is Glucose-6-phosphate isomerase.